The primary structure comprises 905 residues: Chitin synthase 3B (905 aa).

Positions 1–10 (MAYNGRDQEY) are enriched in basic and acidic residues. Positions 1–136 (MAYNGRDQEY…GGGGGLGRSK (136 aa)) are disordered. Residues 81-93 (GPTGYGDTGGSFG) are compositionally biased toward gly residues. N-linked (GlcNAc...) asparagine glycosylation occurs at Asn536. Residues 562-584 (MFFLHIQLIYTTLNTMFAWFSLG) form a helical membrane-spanning segment. N-linked (GlcNAc...) asparagine glycosylation occurs at Asn601. The next 6 helical transmembrane spans lie at 618–638 (IVNA…FILA), 653–673 (SFMV…YLVV), 705–725 (VILV…FMYL), 733–753 (SFPY…VYAF), 832–852 (TGLV…ITST), and 873–893 (FLLY…LWFL).

This sequence belongs to the chitin synthase family. Class III subfamily.

It localises to the cell membrane. The catalysed reaction is [(1-&gt;4)-N-acetyl-beta-D-glucosaminyl](n) + UDP-N-acetyl-alpha-D-glucosamine = [(1-&gt;4)-N-acetyl-beta-D-glucosaminyl](n+1) + UDP + H(+). Its function is as follows. Polymerizes chitin, a structural polymer of the cell wall and septum, by transferring the sugar moiety of UDP-GlcNAc to the non-reducing end of the growing chitin polymer. Plays essential functions in fungal survival and host infection. This Gibberella zeae (strain ATCC MYA-4620 / CBS 123657 / FGSC 9075 / NRRL 31084 / PH-1) (Wheat head blight fungus) protein is Chitin synthase 3B.